The chain runs to 352 residues: tRNA-specific 2-thiouridylase MnmA (352 aa).

Residues 7 to 14 and L33 each bind ATP; that span reads GLSGGVDS. C94 (nucleophile) is an active-site residue. C94 and C193 form a disulfide bridge. Residue G119 coordinates ATP. Positions 143 to 145 are interaction with tRNA; sequence KDQ. C193 acts as the Cysteine persulfide intermediate in catalysis. The interaction with tRNA stretch occupies residues 298-299; sequence RY.

The protein belongs to the MnmA/TRMU family.

It localises to the cytoplasm. The enzyme catalyses S-sulfanyl-L-cysteinyl-[protein] + uridine(34) in tRNA + AH2 + ATP = 2-thiouridine(34) in tRNA + L-cysteinyl-[protein] + A + AMP + diphosphate + H(+). Catalyzes the 2-thiolation of uridine at the wobble position (U34) of tRNA, leading to the formation of s(2)U34. The sequence is that of tRNA-specific 2-thiouridylase MnmA from Microcystis aeruginosa (strain NIES-843 / IAM M-2473).